The following is a 95-amino-acid chain: FXYD domain-containing ion transport regulator 6 (95 aa).

The signal sequence occupies residues 1–18 (MELVLVFLCSLLAPTVLA). Topologically, residues 19 to 35 (SAAEKEKEMDPFHYDYQ) are extracellular. A helical transmembrane segment spans residues 36–58 (TLRIGGLVFAVVLFSVGILLILS). At 59 to 95 (RRCKCSFNQKPRAPGDEEAQVENLITANATEPQKAEN) the chain is on the cytoplasmic side.

It belongs to the FXYD family. As to quaternary structure, regulatory subunit of the sodium/potassium-transporting ATPase which is composed of a catalytic alpha subunit, a non-catalytic beta subunit and an additional regulatory subunit. The regulatory subunit, a member of the FXYD protein family, modulates the enzymatic activity in a tissue- and isoform-specific way by changing affinities of the Na+/K+-ATPase toward Na(+), K(+) or ATP.

It is found in the cell membrane. Functionally, associates with and regulates the activity of the sodium/potassium-transporting ATPase (NKA) which catalyzes the hydrolysis of ATP coupled with the exchange of Na(+) and K(+) ions across the plasma membrane. Reduces the apparent affinity for intracellular Na(+) with no change in the apparent affinity for extracellular K(+). In addition to modulating NKA kinetics, may also function as a regulator of NKA localization to the plasma membrane. This chain is FXYD domain-containing ion transport regulator 6 (FXYD6), found in Pongo abelii (Sumatran orangutan).